The sequence spans 350 residues: Histidinol-phosphate aminotransferase (350 aa).

Lys210 carries the post-translational modification N6-(pyridoxal phosphate)lysine.

It belongs to the class-II pyridoxal-phosphate-dependent aminotransferase family. Histidinol-phosphate aminotransferase subfamily. As to quaternary structure, homodimer. Pyridoxal 5'-phosphate serves as cofactor.

The catalysed reaction is L-histidinol phosphate + 2-oxoglutarate = 3-(imidazol-4-yl)-2-oxopropyl phosphate + L-glutamate. It participates in amino-acid biosynthesis; L-histidine biosynthesis; L-histidine from 5-phospho-alpha-D-ribose 1-diphosphate: step 7/9. This chain is Histidinol-phosphate aminotransferase, found in Pseudomonas syringae pv. syringae (strain B728a).